A 328-amino-acid polypeptide reads, in one-letter code: D-cysteine desulfhydrase (328 aa).

K51 bears the N6-(pyridoxal phosphate)lysine mark.

This sequence belongs to the ACC deaminase/D-cysteine desulfhydrase family. In terms of assembly, homodimer. The cofactor is pyridoxal 5'-phosphate.

The catalysed reaction is D-cysteine + H2O = hydrogen sulfide + pyruvate + NH4(+) + H(+). Its function is as follows. Catalyzes the alpha,beta-elimination reaction of D-cysteine and of several D-cysteine derivatives. It could be a defense mechanism against D-cysteine. The chain is D-cysteine desulfhydrase from Escherichia coli O157:H7.